The primary structure comprises 944 residues: MLDDYYTWTYPDIPENVAQELLQLNGSLVVVGVVGRSDCDLANKMLAFGMEPPDDHTPEDGQIQCYYKPGTFSLLLHFESTYDAEISGQMIDVCIEDVDTPFDIDSFFERIRCRFVRMMLLALHVCHIVVYVENGLTFDPTLLTVFQLAKFAREQHLMQFLPQMLRETPAARISERTRLCAPRILFLFENFPGDEPKTRESVSTCEFQMEDCIYELLGRYNIVTNSSSNSLVALPNNKQFVFFNAHEELRDDKLLKAIDCLNETMYKPDLKEEEEDLEILAMAPFDGFVKPFTMPVYEKEWENLQYQEDHTVWNFLQRHVQDALVGCFDAGSFKQHAQQGPFQLLNSQEWHDCMATMHKLLVENAKDPDHETSNEEYKLFLKNFDEDLNYEKKFWAHLCELGLKKGIAAYKNAAPANYGTATHRQLLADATLAFEEEGRGPQAQAALAKLAAICHNHWEDGRQQCELLSLRSHPCTLPKNMPHEKHNSGVIHISTCNCGRTQGRREDPFNLRQANYEFYELIAQMCNLCVKVKQYQFPIFEPSVSDYRAAAFEAAFPLLNTGKSGAPQDEDAGEDEAEEEEGQERELPTKKKLQNTASNCCSHPLSPTFGSDLNMSIAGFGASLKESQASSEQLSNSEQNTTSSGTSSADTENELVVELQEPAKKEAREDVGPTDAVSTSTTEYLPGLVHTVSNFGLLPLFPSWSLACVGPSSIYSHNTGLQEHFQSGFLSGANFLLPWDVQLRLVHALKQQYQQQHHGKKQQRWKKQGDRLSLKIFVGMEYECSRGHRFMMCAPDRVLRGGADIERDTCSKVVHNNMPLYYPCPCRSQRNFLAQLMRIHVVTPKAPVNIIVDPKVCVGRYTFTLGSIVPPRLSQSAYWIIRLPYVYQGDDVLIAPPDHLDPDYPLAGGYLLPGMFGVVETDPTLDLNEPGMMGASAAGNFTRI.

Disordered stretches follow at residues 560-597 (NTGK…QNTA) and 628-653 (QASS…DTEN). Residues 568–583 (QDEDAGEDEAEEEEGQ) are compositionally biased toward acidic residues. Positions 628-650 (QASSEQLSNSEQNTTSSGTSSAD) are enriched in polar residues.

The protein belongs to the SMG8 family.

Its function is as follows. Involved in nonsense-mediated decay (NMD) of mRNAs containing premature stop codons. Probable component of kinase complex containing nonC and recruited to stalled ribosomes. The polypeptide is Nonsense-mediated mRNA decay factor SMG8 (Drosophila simulans (Fruit fly)).